Consider the following 450-residue polypeptide: UDP-N-acetylmuramoylalanine--D-glutamate ligase (450 aa).

Position 119-125 (119-125) interacts with ATP; sequence GSNGKTT.

Belongs to the MurCDEF family.

The protein resides in the cytoplasm. The catalysed reaction is UDP-N-acetyl-alpha-D-muramoyl-L-alanine + D-glutamate + ATP = UDP-N-acetyl-alpha-D-muramoyl-L-alanyl-D-glutamate + ADP + phosphate + H(+). The protein operates within cell wall biogenesis; peptidoglycan biosynthesis. Cell wall formation. Catalyzes the addition of glutamate to the nucleotide precursor UDP-N-acetylmuramoyl-L-alanine (UMA). This Streptococcus gordonii (strain Challis / ATCC 35105 / BCRC 15272 / CH1 / DL1 / V288) protein is UDP-N-acetylmuramoylalanine--D-glutamate ligase.